The chain runs to 176 residues: RNA polymerase sigma factor SigZ (176 aa).

Residues 30 to 43 carry the Polymerase core binding motif; that stretch reads DLLQIVFMKIQVHL. Positions 125–144 form a DNA-binding region, H-T-H motif; sequence QKELSEKLGISYSGAKSRVQ.

It belongs to the sigma-70 factor family. ECF subfamily.

Sigma factors are initiation factors that promote the attachment of RNA polymerase to specific initiation sites and are then released. The sequence is that of RNA polymerase sigma factor SigZ (sigZ) from Bacillus subtilis (strain 168).